Here is a 307-residue protein sequence, read N- to C-terminus: Small ribosomal subunit biogenesis GTPase RsgA (307 aa).

One can recognise a CP-type G domain in the interval 85-242 (RQDAWKTKLI…LIDSPGLQEF (158 aa)). GTP-binding positions include 135–138 (NKAD) and 184–192 (GQSGMGKST). C266, C271, H273, and C279 together coordinate Zn(2+).

The protein belongs to the TRAFAC class YlqF/YawG GTPase family. RsgA subfamily. In terms of assembly, monomer. Associates with 30S ribosomal subunit, binds 16S rRNA. It depends on Zn(2+) as a cofactor.

Its subcellular location is the cytoplasm. One of several proteins that assist in the late maturation steps of the functional core of the 30S ribosomal subunit. Helps release RbfA from mature subunits. May play a role in the assembly of ribosomal proteins into the subunit. Circularly permuted GTPase that catalyzes slow GTP hydrolysis, GTPase activity is stimulated by the 30S ribosomal subunit. The polypeptide is Small ribosomal subunit biogenesis GTPase RsgA (Neisseria meningitidis serogroup C (strain 053442)).